An 86-amino-acid polypeptide reads, in one-letter code: Large ribosomal subunit protein bL27 (86 aa).

The disordered stretch occupies residues 1–22 (MATKKAGGSSRNGRDSAGRRLG).

It belongs to the bacterial ribosomal protein bL27 family.

This chain is Large ribosomal subunit protein bL27, found in Rickettsia peacockii (strain Rustic).